A 199-amino-acid polypeptide reads, in one-letter code: 7-methyl-GTP pyrophosphatase (199 aa).

The active-site Proton acceptor is the aspartate 74.

The protein belongs to the Maf family. YceF subfamily. A divalent metal cation serves as cofactor.

Its subcellular location is the cytoplasm. It carries out the reaction N(7)-methyl-GTP + H2O = N(7)-methyl-GMP + diphosphate + H(+). Its function is as follows. Nucleoside triphosphate pyrophosphatase that hydrolyzes 7-methyl-GTP (m(7)GTP). May have a dual role in cell division arrest and in preventing the incorporation of modified nucleotides into cellular nucleic acids. The polypeptide is 7-methyl-GTP pyrophosphatase (Cupriavidus metallidurans (strain ATCC 43123 / DSM 2839 / NBRC 102507 / CH34) (Ralstonia metallidurans)).